Consider the following 274-residue polypeptide: MPDFPPKPSVKADIAIIGGSGLYDPGVLENAKEYKIYTPYGEPSDYIIVGELGGKRVAFLPRHGRGHRIPPHKINYRANIWALKMLGVKWVIAVSAVGSLREDYKPGDIVVPDQFIDMTKSRVYTFFDEGIVAHVSMADPFCEHLRQEIISTARELGYRVHPRGTYICIEGPRFSTRAESRVWREVFKADIIGMTLVPEVNLACEAQLCYATIALVTDYDVWAERPVTAEEVARVMKENTEKAKKILYKLIPRLPPEPDKARCSCCSSLETALL.

Phosphate is bound by residues S20, 62 to 63, and 95 to 96; these read RH and SA. A substrate-binding site is contributed by M194. T195 is a binding site for phosphate. 218-220 contacts substrate; that stretch reads DYD.

This sequence belongs to the PNP/MTAP phosphorylase family. MTAP subfamily. In terms of assembly, homohexamer. Dimer of a homotrimer.

The enzyme catalyses S-methyl-5'-thioadenosine + phosphate = 5-(methylsulfanyl)-alpha-D-ribose 1-phosphate + adenine. The protein operates within amino-acid biosynthesis; L-methionine biosynthesis via salvage pathway; S-methyl-5-thio-alpha-D-ribose 1-phosphate from S-methyl-5'-thioadenosine (phosphorylase route): step 1/1. Functionally, catalyzes the reversible phosphorylation of S-methyl-5'-thioadenosine (MTA) to adenine and 5-methylthioribose-1-phosphate. Involved in the breakdown of MTA, a major by-product of polyamine biosynthesis. Responsible for the first step in the methionine salvage pathway after MTA has been generated from S-adenosylmethionine. Has broad substrate specificity with 6-aminopurine nucleosides as preferred substrates. The protein is S-methyl-5'-thioadenosine phosphorylase of Hyperthermus butylicus (strain DSM 5456 / JCM 9403 / PLM1-5).